The primary structure comprises 445 residues: Phosphoglucosamine mutase (445 aa).

Catalysis depends on Ser-102, which acts as the Phosphoserine intermediate. 4 residues coordinate Mg(2+): Ser-102, Asp-241, Asp-243, and Asp-245. A Phosphoserine modification is found at Ser-102.

It belongs to the phosphohexose mutase family. Requires Mg(2+) as cofactor. Activated by phosphorylation.

It carries out the reaction alpha-D-glucosamine 1-phosphate = D-glucosamine 6-phosphate. Its function is as follows. Catalyzes the conversion of glucosamine-6-phosphate to glucosamine-1-phosphate. This chain is Phosphoglucosamine mutase, found in Shewanella pealeana (strain ATCC 700345 / ANG-SQ1).